Consider the following 153-residue polypeptide: MLNVGATAPDFTLRDQNQQLVTLRGYRGAKNVLLVFFPLAFTGICQGELDQLRDHLPEFENDDSAALAISVGPPPTHKIWATQSGFTFPLLSDFWPHGAVSQAYGVFNEQAGIANRGTFVVDRSGIIRFAEMKQPGEVRDQRLWTDALAALTA.

One can recognise a Thioredoxin domain in the interval 2 to 153 (LNVGATAPDF…WTDALAALTA (152 aa)). Residue cysteine 45 is part of the active site.

This sequence belongs to the peroxiredoxin family. AhpE subfamily. In terms of assembly, homodimer. Forms both dimers and octamers; a tightly-associated dimer and a ring-like octamer.

The catalysed reaction is [mycoredoxin]-L-dithiol + a hydroperoxide = [mycoredoxin]-L-disulfide + an alcohol + H2O. Its function is as follows. Thiol-specific peroxidase that catalyzes the reduction of hydrogen peroxide and organic hydroperoxides to water and alcohols, respectively. Plays a role in cell protection against oxidative stress by detoxifying peroxides. May represent an important antioxidant defense against cytotoxic peroxides, especially peroxynitrite, which can be formed by activated macrophages during infection. This chain is Alkyl hydroperoxide reductase E (ahpE), found in Mycobacterium bovis (strain ATCC BAA-935 / AF2122/97).